The following is a 330-amino-acid chain: Aspartate--ammonia ligase (330 aa).

Belongs to the class-II aminoacyl-tRNA synthetase family. AsnA subfamily.

The protein localises to the cytoplasm. The catalysed reaction is L-aspartate + NH4(+) + ATP = L-asparagine + AMP + diphosphate + H(+). The protein operates within amino-acid biosynthesis; L-asparagine biosynthesis; L-asparagine from L-aspartate (ammonia route): step 1/1. This chain is Aspartate--ammonia ligase, found in Salmonella agona (strain SL483).